Consider the following 443-residue polypeptide: Exodeoxyribonuclease 7 large subunit (443 aa).

Belongs to the XseA family. Heterooligomer composed of large and small subunits.

The protein resides in the cytoplasm. It carries out the reaction Exonucleolytic cleavage in either 5'- to 3'- or 3'- to 5'-direction to yield nucleoside 5'-phosphates.. Its function is as follows. Bidirectionally degrades single-stranded DNA into large acid-insoluble oligonucleotides, which are then degraded further into small acid-soluble oligonucleotides. This chain is Exodeoxyribonuclease 7 large subunit, found in Vibrio campbellii (strain ATCC BAA-1116).